Reading from the N-terminus, the 210-residue chain is uncharacterized protein (210 aa).

A run of 4 helical transmembrane segments spans residues 5–25 (LAYIPIAAMMVIIPGADTMLV), 50–70 (FWTVIAILGLSVVIAKSVILF), 75–95 (YLGAAYLIYLGVKSFFAKSMF), and 155–175 (IILASILTLLAVLWFLFLVYI).

It belongs to the Rht family.

It localises to the cell membrane. This is an uncharacterized protein from Bacillus subtilis (strain 168).